Consider the following 366-residue polypeptide: MQVKDQLSSLQPYKPGKSPEQMKEVYGDHAFVKLASNENPFGCSPRVLDELQKSWLDHALYPDGGATTLRQTIANKLQVQMEQVLCGSGLDEVIQIISRAALKAGDNIVTAGATFPQYRHHAIIEGCEVKEVPLNNGVYDLDEISSAVNNNTKIVWICNPNNPTGTYVNDRKLTQFIEGISENTLIVIDEAYYEYVTAKDFPETLPLLEKHKNILVLRTFSKAYGLASFRVGYAIGQEELIEKLNVVRLPFNVSSLAQKAATIAFGDDEFIEEIVRVNTEGLQQYESFCKENDIPFYPSQTNFIFLPVENAGEIYEACAHAGFIIRPFPNGVRITVGTREQNEGVISVLQQHFENKKRKSRDEANA.

A compositionally biased stretch (polar residues) spans 1–11 (MQVKDQLSSLQ). The disordered stretch occupies residues 1–21 (MQVKDQLSSLQPYKPGKSPEQ). An N6-(pyridoxal phosphate)lysine modification is found at K222.

This sequence belongs to the class-II pyridoxal-phosphate-dependent aminotransferase family. Histidinol-phosphate aminotransferase subfamily. Homodimer. Requires pyridoxal 5'-phosphate as cofactor.

It carries out the reaction L-histidinol phosphate + 2-oxoglutarate = 3-(imidazol-4-yl)-2-oxopropyl phosphate + L-glutamate. It functions in the pathway amino-acid biosynthesis; L-histidine biosynthesis; L-histidine from 5-phospho-alpha-D-ribose 1-diphosphate: step 7/9. The protein is Histidinol-phosphate aminotransferase 2 of Bacillus cereus (strain ATCC 10987 / NRS 248).